The primary structure comprises 528 residues: Glutamate--cysteine ligase (528 aa).

This sequence belongs to the glutamate--cysteine ligase type 1 family. Type 1 subfamily.

The enzyme catalyses L-cysteine + L-glutamate + ATP = gamma-L-glutamyl-L-cysteine + ADP + phosphate + H(+). It participates in sulfur metabolism; glutathione biosynthesis; glutathione from L-cysteine and L-glutamate: step 1/2. This Janthinobacterium sp. (strain Marseille) (Minibacterium massiliensis) protein is Glutamate--cysteine ligase.